The following is a 223-amino-acid chain: Probable cell wall protein PGA61 (223 aa).

A signal peptide spans 1 to 16; it reads MKSGLLLAVILPVAFA. Asn-25 carries N-linked (GlcNAc...) asparagine glycosylation. A disordered region spans residues 83-134; sequence GAPSSSSTPTSSTETTSSTEAETTEAETTEQPSSSTSSNTESSKTTILETPS. Composition is skewed to low complexity over residues 84-103 and 111-128; these read APSS…STEA and TEQP…SKTT. The N-linked (GlcNAc...) asparagine glycan is linked to Asn-188. Asn-202 carries the GPI-anchor amidated asparagine lipid modification. The propeptide at 203–223 is removed in mature form; sequence GAGRAAVIGSGSLLALLLNFI.

This sequence belongs to the IHD1 family. The GPI-anchor is attached to the protein in the endoplasmic reticulum and serves to target the protein to the cell surface. There, the glucosamine-inositol phospholipid moiety is cleaved off and the GPI-modified mannoprotein is covalently attached via its lipidless GPI glycan remnant to the 1,6-beta-glucan of the outer cell wall layer.

The protein localises to the secreted. It is found in the cell wall. Its subcellular location is the membrane. Functionally, probable GPI-anchored cell wall protein that may be involved in cell wall organization, hyphal growth, as well as in virulence. The chain is Probable cell wall protein PGA61 (PGA61) from Candida albicans (strain SC5314 / ATCC MYA-2876) (Yeast).